The following is a 371-amino-acid chain: Aromatic peroxygenase (371 aa).

Positions 1 to 18 (MKYFPLFPTLVFAARVVA) are cleaved as a signal peptide. The propeptide occupies 19–43 (FPAYASLAGLSQQELDAIIPTLEAR). An N-linked (GlcNAc...) asparagine glycan is attached at Asn-54. Heme is bound at residue Cys-79. N-linked (GlcNAc...) asparagine glycans are attached at residues Asn-184, Asn-204, Asn-225, and Asn-329. Cys-321 and Cys-362 form a disulfide bridge.

It belongs to the chloroperoxidase family. Heme b serves as cofactor. Post-translationally, N-glycosylated.

It catalyses the reaction RH + H2O2 = ROH + H2O.. Aromatic peroxidase that oxidizes aryl alcohols into the corresponding aldehydes and then into the corresponding benzoic acids. Oxidizes toluene and naphthalene. Catalyzes the regioselective peroxide-dependent hydroxylation of propranolol and diclofenac to 5-hydroxypropranolol and 4'-hydroxydiclofenac. Catalyzes the regioselective peroxide-dependent hydroxylation of naphthalene to 1-naphthol or 2-naphthol via a naphthalene 1,2-oxide intermediate. Catalyzes the regioselective peroxide-dependent oxidation of pyridine to pyridine N-oxide. Halogenates monochlorodimedone and phenol. Oxidizes the sulfur-containing heterocycle dibenzothiophene to yield ring-hydroxylation products and to a lesser extent sulfoxidation products. This is Aromatic peroxygenase from Cyclocybe aegerita (Black poplar mushroom).